Consider the following 125-residue polypeptide: Small ribosomal subunit protein bS6 (125 aa).

This sequence belongs to the bacterial ribosomal protein bS6 family.

Its function is as follows. Binds together with bS18 to 16S ribosomal RNA. This is Small ribosomal subunit protein bS6 (rpsF) from Pasteurella multocida (strain Pm70).